The sequence spans 434 residues: Trigger factor (434 aa).

The PPIase FKBP-type domain maps to 161–246; that stretch reads EDRATLDFTG…LKKVEVRELP (86 aa).

It belongs to the FKBP-type PPIase family. Tig subfamily.

The protein localises to the cytoplasm. It catalyses the reaction [protein]-peptidylproline (omega=180) = [protein]-peptidylproline (omega=0). Its function is as follows. Involved in protein export. Acts as a chaperone by maintaining the newly synthesized protein in an open conformation. Functions as a peptidyl-prolyl cis-trans isomerase. The sequence is that of Trigger factor from Yersinia pseudotuberculosis serotype O:1b (strain IP 31758).